Here is a 222-residue protein sequence, read N- to C-terminus: Large ribosomal subunit protein uL1 (222 aa).

It belongs to the universal ribosomal protein uL1 family. Part of the 50S ribosomal subunit.

In terms of biological role, binds directly to 23S rRNA. Probably involved in E site tRNA release. Protein L1 is also a translational repressor protein, it controls the translation of its operon by binding to its mRNA. This chain is Large ribosomal subunit protein uL1, found in Pyrobaculum aerophilum (strain ATCC 51768 / DSM 7523 / JCM 9630 / CIP 104966 / NBRC 100827 / IM2).